Here is a 396-residue protein sequence, read N- to C-terminus: Imidazolonepropionase (396 aa).

Fe(3+) is bound by residues H70 and H72. Zn(2+) is bound by residues H70 and H72. 3 residues coordinate 4-imidazolone-5-propanoate: R79, Y137, and H164. Residue Y137 coordinates N-formimidoyl-L-glutamate. A Fe(3+)-binding site is contributed by H227. Position 227 (H227) interacts with Zn(2+). A 4-imidazolone-5-propanoate-binding site is contributed by Q230. Position 301 (D301) interacts with Fe(3+). D301 is a Zn(2+) binding site. 2 residues coordinate N-formimidoyl-L-glutamate: N303 and G305. S306 is a binding site for 4-imidazolone-5-propanoate.

It belongs to the metallo-dependent hydrolases superfamily. HutI family. The cofactor is Zn(2+). Requires Fe(3+) as cofactor.

It localises to the cytoplasm. The catalysed reaction is 4-imidazolone-5-propanoate + H2O = N-formimidoyl-L-glutamate. It participates in amino-acid degradation; L-histidine degradation into L-glutamate; N-formimidoyl-L-glutamate from L-histidine: step 3/3. Its function is as follows. Catalyzes the hydrolytic cleavage of the carbon-nitrogen bond in imidazolone-5-propanoate to yield N-formimidoyl-L-glutamate. It is the third step in the universal histidine degradation pathway. This Mycolicibacterium smegmatis (strain ATCC 700084 / mc(2)155) (Mycobacterium smegmatis) protein is Imidazolonepropionase.